A 428-amino-acid polypeptide reads, in one-letter code: 5'-nucleotidase domain-containing protein 4 (428 aa).

The active-site Nucleophile is the Asp-22. Positions 22, 24, and 317 each coordinate Mg(2+). Catalysis depends on Asp-24, which acts as the Proton donor.

It belongs to the 5'(3')-deoxyribonucleotidase family.

The protein is 5'-nucleotidase domain-containing protein 4 (NT5DC4) of Homo sapiens (Human).